The chain runs to 178 residues: Large ribosomal subunit protein uL6 (178 aa).

It belongs to the universal ribosomal protein uL6 family. As to quaternary structure, part of the 50S ribosomal subunit.

This protein binds to the 23S rRNA, and is important in its secondary structure. It is located near the subunit interface in the base of the L7/L12 stalk, and near the tRNA binding site of the peptidyltransferase center. The sequence is that of Large ribosomal subunit protein uL6 from Micrococcus luteus (Micrococcus lysodeikticus).